The chain runs to 347 residues: NADH-quinone oxidoreductase subunit H (347 aa).

A run of 8 helical transmembrane segments spans residues 14–34 (IMIG…AYIL), 82–102 (AVFL…WAVI), 115–135 (VGIL…IMGG), 161–181 (IGFV…TDIV), 198–218 (LLDW…ISAL), 258–278 (AIVL…LPPL), 285–305 (WVPG…MFGI), and 321–341 (LGWK…AFVL).

This sequence belongs to the complex I subunit 1 family. NDH-1 is composed of 14 different subunits. Subunits NuoA, H, J, K, L, M, N constitute the membrane sector of the complex.

The protein resides in the cell inner membrane. It catalyses the reaction a quinone + NADH + 5 H(+)(in) = a quinol + NAD(+) + 4 H(+)(out). Its function is as follows. NDH-1 shuttles electrons from NADH, via FMN and iron-sulfur (Fe-S) centers, to quinones in the respiratory chain. The immediate electron acceptor for the enzyme in this species is believed to be ubiquinone. Couples the redox reaction to proton translocation (for every two electrons transferred, four hydrogen ions are translocated across the cytoplasmic membrane), and thus conserves the redox energy in a proton gradient. This subunit may bind ubiquinone. This Allorhizobium ampelinum (strain ATCC BAA-846 / DSM 112012 / S4) (Agrobacterium vitis (strain S4)) protein is NADH-quinone oxidoreductase subunit H.